Here is a 307-residue protein sequence, read N- to C-terminus: Pseudouridine-5'-phosphate glycosidase (307 aa).

Glu26 acts as the Proton donor in catalysis. Residues Lys88 and Val108 each contribute to the substrate site. Residue Asp140 participates in Mn(2+) binding. 142 to 144 (SAD) serves as a coordination point for substrate. Lys161 acts as the Nucleophile in catalysis.

Belongs to the pseudouridine-5'-phosphate glycosidase family. As to quaternary structure, homotrimer. It depends on Mn(2+) as a cofactor.

It catalyses the reaction D-ribose 5-phosphate + uracil = psi-UMP + H2O. In terms of biological role, catalyzes the reversible cleavage of pseudouridine 5'-phosphate (PsiMP) to ribose 5-phosphate and uracil. Functions biologically in the cleavage direction, as part of a pseudouridine degradation pathway. The chain is Pseudouridine-5'-phosphate glycosidase from Clostridium botulinum (strain Langeland / NCTC 10281 / Type F).